The sequence spans 778 residues: Aerobic respiration control sensor protein ArcB (778 aa).

Topologically, residues 1-25 (MKQIRLLAQYYVDLMMKLGLVRFSM) are cytoplasmic. Residues 26–46 (LLALALVVLAIVVQMAVTMVL) form a helical membrane-spanning segment. Residues 47-57 (HGQVESIDVIR) lie on the Periplasmic side of the membrane. A helical membrane pass occupies residues 58 to 78 (SIFFGLLITPWAVYFLSVVVE). The Cytoplasmic segment spans residues 79 to 778 (QLEESRQRLS…KAWVAKATKK (700 aa)). Residues 153 to 223 (QSSFLRSFLD…ETDEKVFRHN (71 aa)) form the PAS domain. The 53-residue stretch at 226–278 (LTYEQWLDYPDGRKACFEIRKVPYYDRVGKRHGLMGFGRDITERKRYQDALER) folds into the PAC domain. The Histidine kinase domain maps to 289–507 (TISHELRTPL…TFTLTIHAPS (219 aa)). Position 292 is a phosphohistidine; by autocatalysis (His292). In terms of domain architecture, Response regulatory spans 527 to 643 (NVLLVEDIEL…ALTAMIKKFW (117 aa)). The residue at position 576 (Asp576) is a 4-aspartylphosphate. The HPt domain occupies 678–771 (GPKLITDGLA…RHDVEVLKAW (94 aa)). His717 carries the post-translational modification Phosphohistidine.

Activation requires a sequential transfer of a phosphate group from a His in the primary transmitter domain, to an Asp in the receiver domain and to a His in the secondary transmitter domain.

The protein resides in the cell inner membrane. It carries out the reaction ATP + protein L-histidine = ADP + protein N-phospho-L-histidine.. Functionally, member of the two-component regulatory system ArcB/ArcA. Sensor-regulator protein for anaerobic repression of the arc modulon. Activates ArcA via a four-step phosphorelay. ArcB can also dephosphorylate ArcA by a reverse phosphorelay involving His-717 and Asp-576. The protein is Aerobic respiration control sensor protein ArcB (arcB) of Escherichia coli O157:H7.